Here is a 147-residue protein sequence, read N- to C-terminus: UPF0251 protein CTC_01373 (147 aa).

Belongs to the UPF0251 family.

The polypeptide is UPF0251 protein CTC_01373 (Clostridium tetani (strain Massachusetts / E88)).